The chain runs to 896 residues: Translation initiation factor IF-2 (896 aa).

Residues 93 to 219 (VKRDPQEAER…RMAEENEKNW (127 aa)) are compositionally biased toward basic and acidic residues. Residues 93–307 (VKRDPQEAER…GSALQQGFQK (215 aa)) form a disordered region. The span at 256–271 (GRSRSSKAARPAKKGN) shows a compositional bias: basic residues. A compositionally biased stretch (basic and acidic residues) spans 272–285 (KHAESKADREEARA). The 170-residue stretch at 395–564 (PRAPVVTIMG…LLQAEVLELK (170 aa)) folds into the tr-type G domain. Positions 404–411 (GHVDHGKT) are G1. GTP is bound at residue 404–411 (GHVDHGKT). The segment at 429–433 (GITQH) is G2. A G3 region spans residues 450 to 453 (DTPG). Residues 450–454 (DTPGH) and 504–507 (NKID) contribute to the GTP site. The G4 stretch occupies residues 504–507 (NKID). Positions 540–542 (SAK) are G5.

The protein belongs to the TRAFAC class translation factor GTPase superfamily. Classic translation factor GTPase family. IF-2 subfamily.

It is found in the cytoplasm. Functionally, one of the essential components for the initiation of protein synthesis. Protects formylmethionyl-tRNA from spontaneous hydrolysis and promotes its binding to the 30S ribosomal subunits. Also involved in the hydrolysis of GTP during the formation of the 70S ribosomal complex. This chain is Translation initiation factor IF-2, found in Klebsiella pneumoniae subsp. pneumoniae (strain ATCC 700721 / MGH 78578).